We begin with the raw amino-acid sequence, 451 residues long: Heme sensor protein HssS (451 aa).

2 helical membrane-spanning segments follow: residues 9–29 and 164–184; these read IAIY…LFTN and IFLA…VIAS. The region spanning 186 to 238 is the HAMP domain; the sequence is YSIIKPVTALKNATTRIMKGDFSTPIKQTRHDEIGTLQSRFNTMRQNLGQVDQ. The Histidine kinase domain occupies 246-451; it reads NVSHEVKTPL…KTQFIVKLFI (206 aa). His249 is subject to Phosphohistidine; by autocatalysis.

Post-translationally, autophosphorylated.

It localises to the cell membrane. It catalyses the reaction ATP + protein L-histidine = ADP + protein N-phospho-L-histidine.. In terms of biological role, member of the two-component regulatory system HssS/HssR involved in intracellular heme homeostasis and tempering of staphylococcal virulence. HssS functions as a heme sensor histidine kinase which is autophosphorylated at a histidine residue and transfers its phosphate group to an aspartate residue of HssR. HssR/HssS activates the expression of HrtAB, an efflux pump, in response to extracellular heme, hemin, hemoglobin or blood. The sequence is that of Heme sensor protein HssS (hssS) from Staphylococcus epidermidis (strain ATCC 35984 / DSM 28319 / BCRC 17069 / CCUG 31568 / BM 3577 / RP62A).